Here is a 288-residue protein sequence, read N- to C-terminus: Homoserine kinase (288 aa).

Residue 78-88 coordinates ATP; it reads PLARGLGSSSS.

The protein belongs to the GHMP kinase family. Homoserine kinase subfamily.

The protein localises to the cytoplasm. It catalyses the reaction L-homoserine + ATP = O-phospho-L-homoserine + ADP + H(+). The protein operates within amino-acid biosynthesis; L-threonine biosynthesis; L-threonine from L-aspartate: step 4/5. Catalyzes the ATP-dependent phosphorylation of L-homoserine to L-homoserine phosphate. This is Homoserine kinase from Streptococcus agalactiae serotype III (strain NEM316).